A 381-amino-acid chain; its full sequence is Queuine tRNA-ribosyltransferase (381 aa).

Asp-89 functions as the Proton acceptor in the catalytic mechanism. Substrate contacts are provided by residues 89–93 (DSGGF), Asp-143, Gln-187, and Gly-214. The interval 245–251 (GVGKPED) is RNA binding. Asp-264 (nucleophile) is an active-site residue. Positions 269-273 (TRNAR) are RNA binding; important for wobble base 34 recognition. Zn(2+)-binding residues include Cys-302, Cys-304, Cys-307, and His-333.

Belongs to the queuine tRNA-ribosyltransferase family. As to quaternary structure, homodimer. Within each dimer, one monomer is responsible for RNA recognition and catalysis, while the other monomer binds to the replacement base PreQ1. It depends on Zn(2+) as a cofactor.

The catalysed reaction is 7-aminomethyl-7-carbaguanine + guanosine(34) in tRNA = 7-aminomethyl-7-carbaguanosine(34) in tRNA + guanine. It participates in tRNA modification; tRNA-queuosine biosynthesis. Functionally, catalyzes the base-exchange of a guanine (G) residue with the queuine precursor 7-aminomethyl-7-deazaguanine (PreQ1) at position 34 (anticodon wobble position) in tRNAs with GU(N) anticodons (tRNA-Asp, -Asn, -His and -Tyr). Catalysis occurs through a double-displacement mechanism. The nucleophile active site attacks the C1' of nucleotide 34 to detach the guanine base from the RNA, forming a covalent enzyme-RNA intermediate. The proton acceptor active site deprotonates the incoming PreQ1, allowing a nucleophilic attack on the C1' of the ribose to form the product. After dissociation, two additional enzymatic reactions on the tRNA convert PreQ1 to queuine (Q), resulting in the hypermodified nucleoside queuosine (7-(((4,5-cis-dihydroxy-2-cyclopenten-1-yl)amino)methyl)-7-deazaguanosine). The polypeptide is Queuine tRNA-ribosyltransferase (Pectobacterium carotovorum subsp. carotovorum (strain PC1)).